The chain runs to 495 residues: uncharacterized protein (495 aa).

The segment covering Asp305 to Ser317 has biased composition (low complexity). A disordered region spans residues Asp305–Lys404. Over residues Tyr335–Asp347 the composition is skewed to acidic residues. Over residues Glu348 to Asn363 the composition is skewed to low complexity. Acidic residues predominate over residues Ser386 to Glu398.

This is an uncharacterized protein from Dictyostelium discoideum (Social amoeba).